Consider the following 406-residue polypeptide: Immediate early response gene 5-like protein (406 aa).

2 disordered regions span residues 166–195 (QPPH…APAA) and 216–235 (AAPS…PSSS). Residues 182–193 (QPGPAPLPPPAP) show a composition bias toward pro residues.

This sequence belongs to the IER family.

The polypeptide is Immediate early response gene 5-like protein (Ier5l) (Mus musculus (Mouse)).